A 252-amino-acid polypeptide reads, in one-letter code: Probable transcriptional regulatory protein Kole_1935 (252 aa).

This sequence belongs to the TACO1 family.

It is found in the cytoplasm. The chain is Probable transcriptional regulatory protein Kole_1935 from Kosmotoga olearia (strain ATCC BAA-1733 / DSM 21960 / TBF 19.5.1).